The following is a 30-amino-acid chain: Snaclec carinactivase-1 regulatory subunit 17 kDa chain (30 aa).

In terms of domain architecture, C-type lectin spans Asp-1–Cys-30. Residues Cys-2 and Cys-13 are joined by a disulfide bond.

Belongs to the snaclec family. As to quaternary structure, heterodimer of a metalloproteinase subunit and a regulatory subunit comprising two polypeptides disulfide-linked (14 kDa and 17 kDa chains). In terms of tissue distribution, expressed by the venom gland.

Its subcellular location is the secreted. In terms of biological role, calcium-dependent prothrombin activator. This protein may activate prothrombin via recognition by the regulatory subunit of the calcium ion bound conformation of its gamma-carboxyglutamic acid (GLA) domain, and the subsequent conversion of prothrombin to active thrombin is catalyzed by the catalytic subunit. This Echis carinatus (Saw-scaled viper) protein is Snaclec carinactivase-1 regulatory subunit 17 kDa chain.